A 114-amino-acid chain; its full sequence is QVGYSGIVSPDGNNIQFTHDFAHSIVLKGPSGIVTSDGKNLQLTAGQASLQAAAPAPPLPVSHYVASQQSVVGPSGIVSPSGNVQFSHEFADNVVLVGPSGIVTKDGNNLQLRA.

Gln1 carries the pyrrolidone carboxylic acid modification. 4 tandem repeats follow at residues 1 to 17 (QVGYSGIVSPDGNNIQF), 26 to 43 (VLKGPSGIVTSDGKNLQL), 70 to 87 (SVVGPSGIVSPSGNVQFS), and 95 to 112 (VLVGPSGIVTKDGNNLQL).

Calcified shell.

The polypeptide is Cuticle protein CP1158 (Cancer pagurus (Rock crab)).